A 78-amino-acid polypeptide reads, in one-letter code: Acyl carrier protein (78 aa).

Residues 2-77 (SDIEARVKKI…NAIDYANTHQ (76 aa)) form the Carrier domain. Ser-37 is modified (O-(pantetheine 4'-phosphoryl)serine).

Belongs to the acyl carrier protein (ACP) family. Post-translationally, 4'-phosphopantetheine is transferred from CoA to a specific serine of apo-ACP by AcpS. This modification is essential for activity because fatty acids are bound in thioester linkage to the sulfhydryl of the prosthetic group.

It localises to the cytoplasm. It participates in lipid metabolism; fatty acid biosynthesis. Its function is as follows. Carrier of the growing fatty acid chain in fatty acid biosynthesis. The chain is Acyl carrier protein from Comamonas testosteroni (Pseudomonas testosteroni).